The following is a 239-amino-acid chain: THAP domain-containing protein 3 (239 aa).

A THAP-type zinc finger spans residues 1–82 (MPKSCAARQC…LKHNAVPTVF (82 aa)). A disordered region spans residues 84-177 (FQDPTQQVRE…RRTPNKQPSD (94 aa)). At Ser122 the chain carries Phosphoserine. The short motif at 177-180 (DHSY) is the HCFC1-binding motif (HBM) element.

As to quaternary structure, component of a THAP1/THAP3-HCFC1-OGT complex that contains at least, either THAP1 or THAP3, HCFC1 and OGT. Interacts directly with OGT and HCFC1 (via its HBM). As to expression, highly expressed in heart, skeletal muscle and placenta. Weaker expression in brain, kidney and liver.

Component of a THAP1/THAP3-HCFC1-OGT complex that is required for the regulation of the transcriptional activity of RRM1. This chain is THAP domain-containing protein 3 (THAP3), found in Homo sapiens (Human).